Consider the following 490-residue polypeptide: GTPase Der (490 aa).

EngA-type G domains lie at 3–166 and 203–376; these read PVVA…MEDL and IKLA…DSST. Residues 9 to 16, 56 to 60, 118 to 121, 209 to 216, 256 to 260, and 321 to 324 each bind GTP; these read GRPNVGKS, DTGGI, NKTD, DTAGV, and NKWD. The region spanning 377-461 is the KH-like domain; sequence RRVGTSMLTR…PIRIQFKEGE (85 aa).

The protein belongs to the TRAFAC class TrmE-Era-EngA-EngB-Septin-like GTPase superfamily. EngA (Der) GTPase family. Associates with the 50S ribosomal subunit.

Functionally, GTPase that plays an essential role in the late steps of ribosome biogenesis. In Escherichia coli O17:K52:H18 (strain UMN026 / ExPEC), this protein is GTPase Der.